A 75-amino-acid polypeptide reads, in one-letter code: Ferredoxin-thioredoxin reductase, variable chain (75 aa).

The segment at 43-46 is interaction with ferredoxin; that stretch reads QGRP.

It belongs to the ferredoxin thioredoxin reductase alpha subunit family. As to quaternary structure, heterodimer of subunit A (variable subunit) and subunit B (catalytic subunit). Heterodimeric FTR forms a complex with ferredoxin and thioredoxin.

Its function is as follows. Variable subunit of the ferredoxin-thioredoxin reductase (FTR), which catalyzes the two-electron reduction of thioredoxins by the electrons provided by reduced ferredoxin. This is Ferredoxin-thioredoxin reductase, variable chain (ftrV) from Synechocystis sp. (strain ATCC 27184 / PCC 6803 / Kazusa).